We begin with the raw amino-acid sequence, 699 residues long: NAD(P)H-quinone oxidoreductase subunit 5, chloroplastic (699 aa).

Helical transmembrane passes span 1-21, 32-52, 81-101, 117-137, 139-159, 177-197, 216-236, 250-270, 272-292, 319-339, 346-366, 388-408, 417-437, 539-559, and 598-618; these read WIIP…LLLF, WAFP…NLSI, IDPL…TVLI, FAYM…SNLI, IYIF…FWFT, GDFG…SFEF, LFVT…SAQF, TPIS…FLVA, LLPL…IGII, LGYM…FHLI, ALLF…VGYS, ISFL…CFWS, WLYS…TAFY, LFPL…GISF, and IFSV…YKPI.

It belongs to the complex I subunit 5 family. NDH is composed of at least 16 different subunits, 5 of which are encoded in the nucleus.

The protein resides in the plastid. Its subcellular location is the chloroplast thylakoid membrane. The enzyme catalyses a plastoquinone + NADH + (n+1) H(+)(in) = a plastoquinol + NAD(+) + n H(+)(out). The catalysed reaction is a plastoquinone + NADPH + (n+1) H(+)(in) = a plastoquinol + NADP(+) + n H(+)(out). NDH shuttles electrons from NAD(P)H:plastoquinone, via FMN and iron-sulfur (Fe-S) centers, to quinones in the photosynthetic chain and possibly in a chloroplast respiratory chain. The immediate electron acceptor for the enzyme in this species is believed to be plastoquinone. Couples the redox reaction to proton translocation, and thus conserves the redox energy in a proton gradient. This chain is NAD(P)H-quinone oxidoreductase subunit 5, chloroplastic (ndhF), found in Digitalis grandiflora (Yellow foxglove).